Reading from the N-terminus, the 61-residue chain is Insect toxin BsIT1 (61 aa).

The LCN-type CS-alpha/beta domain maps to 1-61 (DGYILMRNGC…KHLNYHKKTC (61 aa)). Intrachain disulfides connect cysteine 10-cysteine 61, cysteine 14-cysteine 35, cysteine 21-cysteine 42, and cysteine 25-cysteine 44.

The protein belongs to the long (4 C-C) scorpion toxin superfamily. Sodium channel inhibitor family. Beta subfamily. In terms of tissue distribution, expressed by the venom gland.

Its subcellular location is the secreted. In terms of biological role, depressant insect beta-toxins cause a transient contraction paralysis followed by a slow flaccid paralysis. They bind voltage-independently at site-4 of sodium channels (Nav) and shift the voltage of activation toward more negative potentials thereby affecting sodium channel activation and promoting spontaneous and repetitive firing. This toxin is active only on insects and causes a transient contraction paralysis followed by a slow flaccid paralysis. This chain is Insect toxin BsIT1, found in Hottentotta tamulus sindicus (Scorpion).